The following is a 227-amino-acid chain: Type II restriction enzyme ScaI (227 aa).

Positions 12 to 35 are disordered; it reads EARVGTRTGGPAMRPKTSDSPYFG.

It carries out the reaction Endonucleolytic cleavage of DNA to give specific double-stranded fragments with terminal 5'-phosphates.. In terms of biological role, a P subtype restriction enzyme that recognizes the double-stranded sequence 5'-AGTACT-3' and cleaves after T-3. The polypeptide is Type II restriction enzyme ScaI (Streptomyces caespitosus).